The primary structure comprises 440 residues: ATP-dependent protease ATPase subunit HslU (440 aa).

ATP is bound by residues isoleucine 18 and 60–65 (GVGKTE). The tract at residues 138–159 (RAQSFDQEDPSAGTRQKLRKKL) is disordered. 3 residues coordinate ATP: aspartate 252, glutamate 318, and arginine 390.

It belongs to the ClpX chaperone family. HslU subfamily. In terms of assembly, a double ring-shaped homohexamer of HslV is capped on each side by a ring-shaped HslU homohexamer. The assembly of the HslU/HslV complex is dependent on binding of ATP.

It is found in the cytoplasm. In terms of biological role, ATPase subunit of a proteasome-like degradation complex; this subunit has chaperone activity. The binding of ATP and its subsequent hydrolysis by HslU are essential for unfolding of protein substrates subsequently hydrolyzed by HslV. HslU recognizes the N-terminal part of its protein substrates and unfolds these before they are guided to HslV for hydrolysis. The polypeptide is ATP-dependent protease ATPase subunit HslU (Alkalilimnicola ehrlichii (strain ATCC BAA-1101 / DSM 17681 / MLHE-1)).